Reading from the N-terminus, the 158-residue chain is UPF0262 protein R00612 (158 aa).

This sequence belongs to the UPF0262 family.

The polypeptide is UPF0262 protein R00612 (Rhizobium meliloti (strain 1021) (Ensifer meliloti)).